A 62-amino-acid polypeptide reads, in one-letter code: MFGIGIPELLVIFVLILLVFGAKRLPEIGGGLGRAIKNFKKATTEPDEIDVTPSSEKKHKDE.

Residues 1-21 (MFGIGIPELLVIFVLILLVFG) form a helical membrane-spanning segment.

This sequence belongs to the TatA/E family. As to quaternary structure, the Tat system comprises two distinct complexes: a TatABC complex, containing multiple copies of TatA, TatB and TatC subunits, and a separate TatA complex, containing only TatA subunits. Substrates initially bind to the TatABC complex, which probably triggers association of the separate TatA complex to form the active translocon.

It localises to the cell inner membrane. Its function is as follows. Part of the twin-arginine translocation (Tat) system that transports large folded proteins containing a characteristic twin-arginine motif in their signal peptide across membranes. TatA could form the protein-conducting channel of the Tat system. The polypeptide is Sec-independent protein translocase protein TatA (Oleidesulfovibrio alaskensis (strain ATCC BAA-1058 / DSM 17464 / G20) (Desulfovibrio alaskensis)).